The primary structure comprises 679 residues: ATP-dependent zinc metalloprotease FtsH (679 aa).

Residues 1 to 6 (MNRIFR) are Cytoplasmic-facing. The chain crosses the membrane as a helical span at residues 7-27 (NTIFYLLIFLVIVGIVSVFNS). Over 28–114 (DQTETENVSF…IEPADETSGW (87 aa)) the chain is Extracellular. The helical transmembrane segment at 115–135 (VQFFTGIIPFIIIFILFFFLL) threads the bilayer. Residues 136–679 (SQAQGGGSRV…SFEDDTNKKE (544 aa)) are Cytoplasmic-facing. ATP is bound at residue 206–213 (GPPGTGKT). His-428 serves as a coordination point for Zn(2+). Glu-429 is an active-site residue. Zn(2+)-binding residues include His-432 and Asp-504. 2 stretches are compositionally biased toward basic and acidic residues: residues 621–642 (LEKE…KEET) and 658–679 (PIEK…NKKE). A disordered region spans residues 621 to 679 (LEKEKASESDVKVNINSKKEETPQVEAEQPQEPNTDEPIEKDPSVEDNRSFEDDTNKKE).

In the central section; belongs to the AAA ATPase family. The protein in the C-terminal section; belongs to the peptidase M41 family. In terms of assembly, homohexamer. The cofactor is Zn(2+).

The protein localises to the cell membrane. Acts as a processive, ATP-dependent zinc metallopeptidase for both cytoplasmic and membrane proteins. Plays a role in the quality control of integral membrane proteins. This is ATP-dependent zinc metalloprotease FtsH from Alkalihalophilus pseudofirmus (strain ATCC BAA-2126 / JCM 17055 / OF4) (Bacillus pseudofirmus).